A 409-amino-acid chain; its full sequence is Transforming growth factor beta-3 proprotein (409 aa).

Positions 1-21 (MHLQRALVVLALLNFATVSLS) are cleaved as a signal peptide. N-linked (GlcNAc...) asparagine glycosylation is found at Asn-72, Asn-133, and Asn-140. The Cell attachment site motif lies at 259-261 (RGD). Intrachain disulfides connect Cys-304/Cys-313, Cys-312/Cys-375, Cys-341/Cys-406, and Cys-345/Cys-408.

The protein belongs to the TGF-beta family. As to quaternary structure, interacts with ASPN. Latency-associated peptide: Homodimer; disulfide-linked. Latency-associated peptide: Interacts with Transforming growth factor beta-3 (TGF-beta-3) chain; interaction is non-covalent and maintains (TGF-beta-3) in a latent state. Latency-associated peptide: Interacts with LRRC32/GARP; leading to regulate activation of TGF-beta-3 and promote epithelial fusion during palate development. Latency-associated peptide: Interacts (via cell attachment site) with integrins, leading to release of the active TGF-beta-3. Transforming growth factor beta-3: Homodimer; disulfide-linked. Transforming growth factor beta-3: Interacts with TGF-beta receptors (TGFBR1 and TGFBR2), leading to signal transduction. Transforming growth factor beta-3 proprotein: The precursor proprotein is cleaved in the Golgi apparatus to form Transforming growth factor beta-3 (TGF-beta-3) and Latency-associated peptide (LAP) chains, which remain non-covalently linked, rendering TGF-beta-3 inactive.

Its subcellular location is the secreted. The protein resides in the extracellular space. It is found in the extracellular matrix. Transforming growth factor beta-3 proprotein: Precursor of the Latency-associated peptide (LAP) and Transforming growth factor beta-3 (TGF-beta-3) chains, which constitute the regulatory and active subunit of TGF-beta-3, respectively. In terms of biological role, required to maintain the Transforming growth factor beta-3 (TGF-beta-3) chain in a latent state during storage in extracellular matrix. Associates non-covalently with TGF-beta-3 and regulates its activation via interaction with 'milieu molecules', such as LTBP1 and LRRC32/GARP, that control activation of TGF-beta-3. Interaction with integrins results in distortion of the Latency-associated peptide chain and subsequent release of the active TGF-beta-3. Its function is as follows. Transforming growth factor beta-3: Multifunctional protein that regulates embryogenesis and cell differentiation and is required in various processes such as secondary palate development. Activation into mature form follows different steps: following cleavage of the proprotein in the Golgi apparatus, Latency-associated peptide (LAP) and Transforming growth factor beta-3 (TGF-beta-3) chains remain non-covalently linked rendering TGF-beta-3 inactive during storage in extracellular matrix. At the same time, LAP chain interacts with 'milieu molecules', such as LTBP1 and LRRC32/GARP that control activation of TGF-beta-3 and maintain it in a latent state during storage in extracellular milieus. TGF-beta-3 is released from LAP by integrins: integrin-binding results in distortion of the LAP chain and subsequent release of the active TGF-beta-3. Once activated following release of LAP, TGF-beta-3 acts by binding to TGF-beta receptors (TGFBR1 and TGFBR2), which transduce signal. This chain is Transforming growth factor beta-3 proprotein (TGFB3), found in Sus scrofa (Pig).